The sequence spans 263 residues: 3-methyl-2-oxobutanoate hydroxymethyltransferase (263 aa).

Mg(2+) contacts are provided by D45 and D84. Residues 45–46, D84, and K112 contribute to the 3-methyl-2-oxobutanoate site; that span reads DS. E114 serves as a coordination point for Mg(2+). Catalysis depends on E181, which acts as the Proton acceptor.

This sequence belongs to the PanB family. As to quaternary structure, homodecamer; pentamer of dimers. It depends on Mg(2+) as a cofactor.

Its subcellular location is the cytoplasm. The catalysed reaction is 3-methyl-2-oxobutanoate + (6R)-5,10-methylene-5,6,7,8-tetrahydrofolate + H2O = 2-dehydropantoate + (6S)-5,6,7,8-tetrahydrofolate. It functions in the pathway cofactor biosynthesis; (R)-pantothenate biosynthesis; (R)-pantoate from 3-methyl-2-oxobutanoate: step 1/2. In terms of biological role, catalyzes the reversible reaction in which hydroxymethyl group from 5,10-methylenetetrahydrofolate is transferred onto alpha-ketoisovalerate to form ketopantoate. The polypeptide is 3-methyl-2-oxobutanoate hydroxymethyltransferase (Photorhabdus laumondii subsp. laumondii (strain DSM 15139 / CIP 105565 / TT01) (Photorhabdus luminescens subsp. laumondii)).